The chain runs to 1649 residues: MATDGASCEPDLSRAPEDAAGAAAEAAKKEFDVDTLSKSELRMLLSVMEGELEARDLVIEALRARRKEVFIQERYGRFNLNDPFLALQRDYEAGAGDKEKKPVCTNPLSILEAVMAHCRKMQERMSAQLAAAESRQKKLEMEKLQLQALEQEHKKLATRLEEERGKNKQVVLMLVKECKQLSGKVIEEAQKLEDVMAKLEEEKKKTNELEEELCAEKRRSTEMEAQMEKQLSEFDTEREQLRAKLNREEAHTTDLKEEIDKMKKMIEQLKRGSDSKPSLSLPRKTKDRRLVSISVGTEGTVTRSVACQTDLVTESADHVKKLPLTMPVKPSTGSPLASANAKGSVCTSAAMARPGIDRQASHGDLIGVSVPAFPPSSASRIEENGPSTGSTPDPTSSTPPLPSNAAPPTAQTPGITPQNSQAPPMHSLHSPCANASLHPGLNPRIQAARFRFQGNANDPDQNGNTTQSPPSRDVSPTSRDNLVAKQLARNTVTQALSRFTGPQAGAPPRPGAPPAGDVGTHPSVGRTSVKTHGVARVDRGNPPPIPPKKPGLSQTPSPPHPQLKVIIDSSRASNTGAKGDNKTVASPPSSLPQGNRVINEENLPKSSSPQLPPKPSIDLTVAPAGCAVSALATSQVGAWPAATPGLNQPACSDSSLVIPTTIAFCSSINPVSASSCRPGASDSLLVTASGWSPSLTPLLMSGGPAPLAGRPTLLQQAAAQGNVTLLSMLLNEEGLDINYSCEDGHSALYSAAKNGHTDCVRLLLSAEAQVNAADKNGFTPLCAAAAQGHFKCVELLIAYDANINHAADGGQTPLYLACKNGNKECIKLLLEAGTDRSVKTTDGWTPVHAAVDTGNVDSLKLLMYHRVPAHGNSFSEEESESGVFDLDGGEESPEGKSKPVVTADLINHANREGWTAAHIAASKGFKNCLEILCRHGGLETERRDKCNRTVHDVATDDCKHLLENLNALKIPLRISVGEIEPSNYGSDDFECENTICALNIRKQTSWDDFSKAVSQALTNHFQAISSDGWWSLEDVTCNNTTDSNIGLSARSIRSITLGNVPWSVGQSFAQSPWDFMMKNKAEHITVLLSGPQEGCLSSVTYASMIPLQMMQNYLRLVEQYHNVIFHGPEGSLQDYIVHQLALCLKHRQMAAGFSCEIVRAEVDAGFSKKQLLDLFISSACLIPVKQSPVKKKIIIILENLEKSSLSELLRDFLAPLENRSTESPCTFQKGNGMSECYYFHENCFLMGTIAKACLQGSDLLVQQHFRWVQLRWDAEPMQGLLQRFLRRKVVNKFRGQVPPPCDPVCKTVDWALSVWRQLNSCLARLGTPEALLGPKYFLSCPVVPGHAQVTVKWMSKLWNGVITPRVQEAILSRASVKRQPGFGQTTAKRHPSQGQQAVVKAALSILLNKAVLHGCPLPRAELEQHTADFKGGSFPLSIVSSYNSCSKKKGESGAWRRVNTSPRRKSSRFSLPTWNKPDLSNEGIKNKTLSQLNCNRNASLSKQKSLENDVSLTLNLDQRLSLGSDDEADLVKELQSMCSSKSESDISKIADSRDDLRMFDSSGNHPVFSATINNLRMPVSQKEVCPLSSHQTTECSNSKSKTELGVSRVKSFLPVPRSKVTQCSQNTKRSSSSSNTRQIEINNNSKEEN.

A disordered region spans residues 1 to 23 (MATDGASCEPDLSRAPEDAAGAA). Residues 119 to 276 (RKMQERMSAQ…EQLKRGSDSK (158 aa)) adopt a coiled-coil conformation. Disordered stretches follow at residues 366-440 (IGVS…LHPG) and 454-478 (GNANDPDQNGNTTQSPPSRDVSPTS). Low complexity-rich tracts occupy residues 368-379 (VSVPAFPPSSAS) and 386-396 (PSTGSTPDPTS). Residues 411–422 (QTPGITPQNSQA) show a composition bias toward polar residues. Position 498 is an asymmetric dimethylarginine (R498). The disordered stretch occupies residues 499 to 616 (FTGPQAGAPP…SSPQLPPKPS (118 aa)). The span at 583-593 (TVASPPSSLPQ) shows a compositional bias: polar residues. ANK repeat units lie at residues 709 to 739 (GRPTLLQQAAAQGNVTLLSMLLNEEGLDINY), 743 to 772 (DGHSALYSAAKNGHTDCVRLLLSAEAQVNA), 776 to 805 (NGFTPLCAAAAQGHFKCVELLIAYDANINH), 809 to 838 (GGQTPLYLACKNGNKECIKLLLEAGTDRSV), and 842 to 871 (DGWTPVHAAVDTGNVDSLKLLMYHRVPAHG). A disordered region spans residues 872–897 (NSFSEEESESGVFDLDGGEESPEGKS). One copy of the ANK 6 repeat lies at 912–942 (EGWTAAHIAASKGFKNCLEILCRHGGLETER). The disordered stretch occupies residues 1444–1482 (SCSKKKGESGAWRRVNTSPRRKSSRFSLPTWNKPDLSNE). At S1524 the chain carries Phosphoserine. A disordered region spans residues 1616–1649 (PRSKVTQCSQNTKRSSSSSNTRQIEINNNSKEEN). Low complexity predominate over residues 1624-1638 (SQNTKRSSSSSNTRQ). The segment covering 1639–1649 (IEINNNSKEEN) has biased composition (polar residues).

Interacts with CTTN/cortactin SH3 domain. Interacts with STRN, STRN4/zinedin and MOB4/phocein; this interactions mediate the association with the STRIPAK core complex and may regulate dendritic spine distribution of the STRIPAK complex in hippocampal neurons. Activation of glutamate receptors weakens the interaction with STRN and STRN4.

The protein resides in the cytoplasm. It is found in the cell cortex. The protein localises to the cell projection. It localises to the dendritic spine. Regulates the dendritic spine distribution of CTTN/cortactin in hippocampal neurons, and thus controls dendritic spinogenesis and dendritic spine maintenance. Associates with the striatin-interacting phosphatase and kinase (STRIPAK) core complex to regulate dendritic spine distribution of the STRIPAK complex in hippocampal neurons. The protein is Cortactin-binding protein 2 (CTTNBP2) of Aotus nancymaae (Ma's night monkey).